The chain runs to 151 residues: Neuroglobin (151 aa).

In terms of domain architecture, Globin spans 1–149 (MERPEQELIR…VVQAMSRGWD (149 aa)). Heme b is bound by residues His-64 and His-96.

Belongs to the globin family. In terms of assembly, monomer. Homodimer and homotetramer; disulfide-linked. Mainly monomeric but also detected as part of homodimers and homotetramers. Interacts with 14-3-3 proteins; regulates the phosphorylation of NGB. Could interact (ferrous form) with G-alpha(i) proteins (GTP-bound form). Post-translationally, phosphorylated during hypoxia by ERK1/ERK2. Phosphorylation regulates the heme pocket hexacoordination preventing the association of His-64 with the heme metal center. Thereby, promotes the access of dioxygen and nitrite to the heme and stimulates the nitrite reductase activity. Phosphorylation during hypoxia is stabilized by 14-3-3 proteins.

The protein resides in the cytoplasm. It is found in the cytosol. Its subcellular location is the mitochondrion matrix. The enzyme catalyses Fe(III)-heme b-[protein] + nitric oxide + H2O = Fe(II)-heme b-[protein] + nitrite + 2 H(+). In terms of biological role, monomeric globin with a bis-histidyl six-coordinate heme-iron atom through which it can bind dioxygen, carbon monoxide and nitric oxide. Could help transport oxygen and increase its availability to the metabolically active neuronal tissues, though its low quantity in tissues as well as its high affinity for dioxygen, which may limit its oxygen-releasing ability, argue against it. The ferrous/deoxygenated form exhibits a nitrite reductase activity and it could produce nitric oxide which in turn inhibits cellular respiration in response to hypoxia. In its ferrous/deoxygenated state, it may also exhibit GDI (Guanine nucleotide Dissociation Inhibitor) activity toward heterotrimeric G-alpha proteins, thereby regulating signal transduction to facilitate neuroprotective responses in the wake of hypoxia and associated oxidative stress. The protein is Neuroglobin of Oryctolagus cuniculus (Rabbit).